The primary structure comprises 308 residues: Ribosomal RNA large subunit methyltransferase F (308 aa).

The protein belongs to the methyltransferase superfamily. METTL16/RlmF family.

It is found in the cytoplasm. The catalysed reaction is adenosine(1618) in 23S rRNA + S-adenosyl-L-methionine = N(6)-methyladenosine(1618) in 23S rRNA + S-adenosyl-L-homocysteine + H(+). Functionally, specifically methylates the adenine in position 1618 of 23S rRNA. In Salmonella paratyphi A (strain ATCC 9150 / SARB42), this protein is Ribosomal RNA large subunit methyltransferase F.